The following is a 303-amino-acid chain: E3 ubiquitin-protein ligase SINA-like 3 (303 aa).

A disordered region spans residues 1 to 30; it reads MENITNNSERSLDRPKRQRPVSMENVGGTA. The RING-type zinc-finger motif lies at 49–85; that stretch reads CPICYHKLGAPIYQCDNGHIACSSCCKKVKYKCPYCS. The tract at residues 99–286 is SBD; it reads IVEAVVVSCP…MSIPYYLLDE (188 aa). An SIAH-type zinc finger spans residues 102-162; that stretch reads AVVVSCPNAK…LYRHYHAEHK (61 aa). Zn(2+) is bound by residues C107, C114, H128, C132, C139, C144, H156, and H161.

The protein belongs to the SINA (Seven in absentia) family.

It catalyses the reaction S-ubiquitinyl-[E2 ubiquitin-conjugating enzyme]-L-cysteine + [acceptor protein]-L-lysine = [E2 ubiquitin-conjugating enzyme]-L-cysteine + N(6)-ubiquitinyl-[acceptor protein]-L-lysine.. It participates in protein modification; protein ubiquitination. Functionally, E3 ubiquitin-protein ligase that mediates ubiquitination and subsequent proteasomal degradation of target proteins. E3 ubiquitin ligases accept ubiquitin from an E2 ubiquitin-conjugating enzyme in the form of a thioester and then directly transfers the ubiquitin to targeted substrates. It probably triggers the ubiquitin-mediated degradation of different substrates. This is E3 ubiquitin-protein ligase SINA-like 3 from Arabidopsis thaliana (Mouse-ear cress).